A 312-amino-acid chain; its full sequence is Olfactory receptor 10D3 (312 aa).

The Extracellular segment spans residues 1-26 (MEIKNCSVVTEFILLGIPHTEGFETL). Asparagine 5 carries an N-linked (GlcNAc...) asparagine glycan. A helical transmembrane segment spans residues 27–47 (LFVLFLPFYACTLVGNVSILV). Topologically, residues 48 to 57 (AVISSTRLHT) are cytoplasmic. The chain crosses the membrane as a helical span at residues 58 to 78 (PMYFFLGNLSVFDMGFSSVTC). At 79 to 97 (PKMLFYLMGLSRLISYQDC) the chain is on the extracellular side. A disulfide bridge links cysteine 97 with cysteine 179. The helical transmembrane segment at 98–118 (VSQLFFFHFLGSIECFLYTVM) threads the bilayer. Residues 119–139 (AYDRFAAICHPLRYSVIMNSK) are Cytoplasmic-facing. Residues 140–160 (ICVALAVGTWLLGCFHSSVLT) traverse the membrane as a helical segment. The Extracellular segment spans residues 161 to 197 (SLTFTLPYCGPNEVDHFFCDIPAILPLASADTSLAQR). The chain crosses the membrane as a helical span at residues 198 to 218 (VSFTNVGLVSLVCFLLILLSY). The Cytoplasmic segment spans residues 219–239 (TRITISILSIQSTEGRQRAFS). Residues 240–260 (TCSAHLIAILCAYGPIITIYL) traverse the membrane as a helical segment. Over 261-266 (QPTPNP) the chain is Extracellular. A helical transmembrane segment spans residues 267–287 (MLGTVVQILMNLVGPMLNPLI). Over 288-312 (YTLRNKEVKIALKKILHGKGSVSEG) the chain is Cytoplasmic.

It belongs to the G-protein coupled receptor 1 family.

It localises to the cell membrane. Functionally, potential odorant receptor. This Mus musculus (Mouse) protein is Olfactory receptor 10D3.